The sequence spans 310 residues: 4-diphosphocytidyl-2-C-methyl-D-erythritol kinase (310 aa).

Lysine 10 is an active-site residue. 102–112 (PVAGGMAGGSA) serves as a coordination point for ATP. Aspartate 144 is a catalytic residue. The segment at 289–310 (TRTARGPAAGAQLLPGPVGSFA) is disordered.

This sequence belongs to the GHMP kinase family. IspE subfamily.

The catalysed reaction is 4-CDP-2-C-methyl-D-erythritol + ATP = 4-CDP-2-C-methyl-D-erythritol 2-phosphate + ADP + H(+). The protein operates within isoprenoid biosynthesis; isopentenyl diphosphate biosynthesis via DXP pathway; isopentenyl diphosphate from 1-deoxy-D-xylulose 5-phosphate: step 3/6. Catalyzes the phosphorylation of the position 2 hydroxy group of 4-diphosphocytidyl-2C-methyl-D-erythritol. The chain is 4-diphosphocytidyl-2-C-methyl-D-erythritol kinase from Cutibacterium acnes (strain DSM 16379 / KPA171202) (Propionibacterium acnes).